A 202-amino-acid chain; its full sequence is Holliday junction branch migration complex subunit RuvA (202 aa).

The segment at 1–64 (MIGYLKGQIL…YDGTVLYGFL (64 aa)) is domain I. The tract at residues 65–146 (TKEDKQLWAI…AVTIAGVPKI (82 aa)) is domain II. Residues 147 to 155 (KIEGEAPFM) form a flexible linker region. Residues 155-202 (MSEVMMALTALGYSPMEARKAIDQLYKTGLANDSVENIIRAALRILKK) form a domain III region.

It belongs to the RuvA family. In terms of assembly, homotetramer. Forms an RuvA(8)-RuvB(12)-Holliday junction (HJ) complex. HJ DNA is sandwiched between 2 RuvA tetramers; dsDNA enters through RuvA and exits via RuvB. An RuvB hexamer assembles on each DNA strand where it exits the tetramer. Each RuvB hexamer is contacted by two RuvA subunits (via domain III) on 2 adjacent RuvB subunits; this complex drives branch migration. In the full resolvosome a probable DNA-RuvA(4)-RuvB(12)-RuvC(2) complex forms which resolves the HJ.

It localises to the cytoplasm. In terms of biological role, the RuvA-RuvB-RuvC complex processes Holliday junction (HJ) DNA during genetic recombination and DNA repair, while the RuvA-RuvB complex plays an important role in the rescue of blocked DNA replication forks via replication fork reversal (RFR). RuvA specifically binds to HJ cruciform DNA, conferring on it an open structure. The RuvB hexamer acts as an ATP-dependent pump, pulling dsDNA into and through the RuvAB complex. HJ branch migration allows RuvC to scan DNA until it finds its consensus sequence, where it cleaves and resolves the cruciform DNA. In Elusimicrobium minutum (strain Pei191), this protein is Holliday junction branch migration complex subunit RuvA.